Consider the following 169-residue polypeptide: Disulfide bond formation protein B 1 (169 aa).

At Met-1 to Tyr-14 the chain is on the cytoplasmic side. The chain crosses the membrane as a helical span at residues Leu-15–Tyr-31. The Periplasmic segment spans residues Met-32–Tyr-49. Cys-41 and Cys-44 form a disulfide bridge. The helical transmembrane segment at Ala-50 to Met-64 threads the bilayer. Residues Arg-65–Thr-71 are Cytoplasmic-facing. A helical membrane pass occupies residues Val-72–Gly-89. Residues His-90–Gln-144 lie on the Periplasmic side of the membrane. Cys-102 and Cys-130 are disulfide-bonded. Residues Trp-145–Arg-163 traverse the membrane as a helical segment. The Cytoplasmic portion of the chain corresponds to Asn-164–Arg-169.

The protein belongs to the DsbB family.

It localises to the cell inner membrane. In terms of biological role, required for disulfide bond formation in some periplasmic proteins. Acts by oxidizing the DsbA protein. In Pseudomonas fluorescens (strain Pf0-1), this protein is Disulfide bond formation protein B 1.